Reading from the N-terminus, the 494-residue chain is uncharacterized protein (494 aa).

This is an uncharacterized protein from Acanthamoeba polyphaga (Amoeba).